The chain runs to 452 residues: Protein CLT3, chloroplastic (452 aa).

Residues 1 to 34 (MATTSRRFTTGLFASITSVKSHSANRPQSISLIR) constitute a chloroplast transit peptide. The next 10 helical transmembrane spans lie at 105-125 (AEIV…RVMY), 137-157 (FFLA…ILYF), 175-195 (PFLI…AAAA), 202-222 (TTVL…IFLG), 230-250 (ILGC…GSGA), 258-278 (GVLW…GTVL), 307-327 (FQAI…GIPF), 353-373 (GAPF…IALL), 389-409 (TVSV…LGVA), and 412-432 (LPKG…LYSW).

The protein belongs to the CRT-like transporter family.

The protein resides in the plastid. It localises to the chloroplast membrane. Functionally, involved in thiol transport from the plastid to the cytosol. Transports probably both glutathione (GSH) and its precursor, gamma-glutamylcysteine (gamma-EC). Exhibits some functional redundancy with CLT1 in maintaining the root GSH pool. This is Protein CLT3, chloroplastic from Arabidopsis thaliana (Mouse-ear cress).